The sequence spans 692 residues: ABC transporter F family member 5 (692 aa).

Residues 64–95 (EIESLFSKQPSQQDSDRKRNGKSSKNGASGIS) form a disordered region. Over residues 86 to 95 (SSKNGASGIS) the composition is skewed to polar residues. 2 ABC transporter domains span residues 98–356 (VKLE…ETQN) and 425–640 (VNVK…TKEL). Residues 130–137 (GVNGAGKT) and 457–464 (GPNGCGKS) contribute to the ATP site. Residues 644–692 (AELEEKAPKVKAKSKMSKAEKEARKKQKMQAFQQAKQKSKASKNSKRWN) are disordered. A compositionally biased stretch (basic residues) spans 680-692 (QKSKASKNSKRWN).

Belongs to the ABC transporter superfamily. ABCF family. EF3 (TC 3.A.1.121) subfamily.

The sequence is that of ABC transporter F family member 5 (ABCF5) from Arabidopsis thaliana (Mouse-ear cress).